The sequence spans 313 residues: Putative olfactory receptor 2B3 (313 aa).

Residues 1-25 (MNWENESSPKEFILLGFSDRAWLQM) are Extracellular-facing. N5 carries N-linked (GlcNAc...) asparagine glycosylation. Residues 26–49 (PLFVVLLISYTITIFGNVSIMMVC) form a helical membrane-spanning segment. Over 50–57 (ILDPKLHT) the chain is Cytoplasmic. The chain crosses the membrane as a helical span at residues 58-79 (PMYFFLTNLSILDLCYTTTTVP). Topologically, residues 80–100 (HMLVNIGCNKKTISYAGCVAH) are extracellular. A disulfide bridge connects residues C97 and C189. The helical transmembrane segment at 101–120 (LIIFLALGATECLLLAVMSF) threads the bilayer. At 121–139 (DRYVAVCRPLHYVVIMNYW) the chain is on the cytoplasmic side. A helical transmembrane segment spans residues 140 to 158 (FCLRMAAFSWLIGFGNSVL). Residues 159–195 (QSSLTLNMPRCGHQEVDHFFCEVPALLKLSCADTKPI) lie on the Extracellular side of the membrane. A helical membrane pass occupies residues 196-219 (EAELFFFSVLILLIPVTLILISYG). The Cytoplasmic segment spans residues 220–236 (FIAQAVLKIRSAEGRQK). A helical transmembrane segment spans residues 237-259 (AFGTCGSHMIVVSLFYGTAIYMY). At 260–272 (LQPPSSTSKDWGK) the chain is on the extracellular side. Residues 273–292 (MVSLFYGIITSMLNSLIYSL) traverse the membrane as a helical segment. Residues 293-313 (RNKDMKEAFKRLMPRIFFCKK) lie on the Cytoplasmic side of the membrane.

It belongs to the G-protein coupled receptor 1 family.

It is found in the cell membrane. Functionally, odorant receptor. In Homo sapiens (Human), this protein is Putative olfactory receptor 2B3 (OR2B3).